The sequence spans 368 residues: Type 2 DNA topoisomerase 6 subunit A (368 aa).

Positions 9–148 (PDTEEAREQL…FHMRPEESGA (140 aa)) constitute a Topo IIA-type catalytic domain. Tyrosine 103 functions as the O-(5'-phospho-DNA)-tyrosine intermediate in the catalytic mechanism. Positions 201 and 253 each coordinate Mg(2+).

The protein belongs to the TOP6A family. As to quaternary structure, homodimer. Heterotetramer of two Top6A and two Top6B chains. Requires Mg(2+) as cofactor.

The enzyme catalyses ATP-dependent breakage, passage and rejoining of double-stranded DNA.. Relaxes both positive and negative superturns and exhibits a strong decatenase activity. The protein is Type 2 DNA topoisomerase 6 subunit A of Haloarcula marismortui (strain ATCC 43049 / DSM 3752 / JCM 8966 / VKM B-1809) (Halobacterium marismortui).